The chain runs to 374 residues: Histidinol-phosphate aminotransferase 1 (374 aa).

Lys-232 carries the N6-(pyridoxal phosphate)lysine modification.

It belongs to the class-II pyridoxal-phosphate-dependent aminotransferase family. Histidinol-phosphate aminotransferase subfamily. As to quaternary structure, homodimer. Requires pyridoxal 5'-phosphate as cofactor.

The enzyme catalyses L-histidinol phosphate + 2-oxoglutarate = 3-(imidazol-4-yl)-2-oxopropyl phosphate + L-glutamate. It functions in the pathway amino-acid biosynthesis; L-histidine biosynthesis; L-histidine from 5-phospho-alpha-D-ribose 1-diphosphate: step 7/9. This is Histidinol-phosphate aminotransferase 1 (hisC1) from Ralstonia nicotianae (strain ATCC BAA-1114 / GMI1000) (Ralstonia solanacearum).